The primary structure comprises 141 residues: ATP synthase epsilon chain (141 aa).

The protein belongs to the ATPase epsilon chain family. F-type ATPases have 2 components, CF(1) - the catalytic core - and CF(0) - the membrane proton channel. CF(1) has five subunits: alpha(3), beta(3), gamma(1), delta(1), epsilon(1). CF(0) has three main subunits: a, b and c.

Its subcellular location is the cell inner membrane. Functionally, produces ATP from ADP in the presence of a proton gradient across the membrane. The protein is ATP synthase epsilon chain of Paraburkholderia phymatum (strain DSM 17167 / CIP 108236 / LMG 21445 / STM815) (Burkholderia phymatum).